Reading from the N-terminus, the 210-residue chain is MKVIAFARNDLGTGASRRQRIAGLTPGIVYGGTAAPVNISLDHNALYHALKKEAFHSSILDLEVDGKVEQVLLRDFQVHAYKQLVLHADFQRVDAKQKIHVKVPLHFINAEISPAVKLQAGIISHVATELDITCLPGNLPEFVEVDLATLEVGHSIHLADIKLPKGVVAVIHGGEDNPTIATAAVPAGKVEEAAAAPAAAAAPAAPADKK.

The protein belongs to the bacterial ribosomal protein bL25 family. CTC subfamily. Part of the 50S ribosomal subunit; part of the 5S rRNA/L5/L18/L25 subcomplex. Contacts the 5S rRNA. Binds to the 5S rRNA independently of L5 and L18.

This is one of the proteins that binds to the 5S RNA in the ribosome where it forms part of the central protuberance. The protein is Large ribosomal subunit protein bL25 of Herminiimonas arsenicoxydans.